We begin with the raw amino-acid sequence, 900 residues long: Protein translocase subunit SecA (900 aa).

ATP-binding positions include Q87, 105–109 (GEGKT), and D512. Residues 842-852 (QQRREEAERLA) show a composition bias toward basic and acidic residues. Residues 842–900 (QQRREEAERLARQQQLSHQEEDSLNTGSPAQADRKIGRNDPCPCGSGKKYKQCHGRLQK) are disordered. Positions 883, 885, 894, and 895 each coordinate Zn(2+). Basic residues predominate over residues 889–900 (KKYKQCHGRLQK).

Belongs to the SecA family. In terms of assembly, monomer and homodimer. Part of the essential Sec protein translocation apparatus which comprises SecA, SecYEG and auxiliary proteins SecDF-YajC and YidC. Zn(2+) serves as cofactor.

The protein localises to the cell inner membrane. The protein resides in the cytoplasm. The enzyme catalyses ATP + H2O + cellular proteinSide 1 = ADP + phosphate + cellular proteinSide 2.. In terms of biological role, part of the Sec protein translocase complex. Interacts with the SecYEG preprotein conducting channel. Has a central role in coupling the hydrolysis of ATP to the transfer of proteins into and across the cell membrane, serving both as a receptor for the preprotein-SecB complex and as an ATP-driven molecular motor driving the stepwise translocation of polypeptide chains across the membrane. The chain is Protein translocase subunit SecA from Pectobacterium carotovorum subsp. carotovorum (strain PC1).